A 76-amino-acid polypeptide reads, in one-letter code: Large ribosomal subunit protein eL20 (76 aa).

The protein belongs to the eukaryotic ribosomal protein eL20 family. As to quaternary structure, part of the 50S ribosomal subunit. Binds 23S rRNA.

The polypeptide is Large ribosomal subunit protein eL20 (Methanocaldococcus jannaschii (strain ATCC 43067 / DSM 2661 / JAL-1 / JCM 10045 / NBRC 100440) (Methanococcus jannaschii)).